The primary structure comprises 375 residues: Heat-inducible transcription repressor HrcA (375 aa).

Over residues 307 to 318 the composition is skewed to low complexity; sequence ATDGATHAAASS. Residues 307-331 form a disordered region; the sequence is ATDGATHAAASSQTENQSGDDTRQA.

Belongs to the HrcA family.

In terms of biological role, negative regulator of class I heat shock genes (grpE-dnaK-dnaJ and groELS operons). Prevents heat-shock induction of these operons. The sequence is that of Heat-inducible transcription repressor HrcA from Bifidobacterium adolescentis (strain ATCC 15703 / DSM 20083 / NCTC 11814 / E194a).